The chain runs to 248 residues: tRNA (guanine-N(7)-)-methyltransferase (248 aa).

Glu-80, Glu-105, Asp-132, and Asp-155 together coordinate S-adenosyl-L-methionine. Asp-155 is an active-site residue. Substrate contacts are provided by residues Lys-159, Asp-191, and Thr-223–Glu-226.

This sequence belongs to the class I-like SAM-binding methyltransferase superfamily. TrmB family.

The catalysed reaction is guanosine(46) in tRNA + S-adenosyl-L-methionine = N(7)-methylguanosine(46) in tRNA + S-adenosyl-L-homocysteine. It participates in tRNA modification; N(7)-methylguanine-tRNA biosynthesis. Functionally, catalyzes the formation of N(7)-methylguanine at position 46 (m7G46) in tRNA. In Nocardioides sp. (strain ATCC BAA-499 / JS614), this protein is tRNA (guanine-N(7)-)-methyltransferase.